The chain runs to 188 residues: Nicotinamide-nucleotide adenylyltransferase (188 aa).

It belongs to the archaeal NMN adenylyltransferase family.

The protein resides in the cytoplasm. It carries out the reaction beta-nicotinamide D-ribonucleotide + ATP + H(+) = diphosphate + NAD(+). Its pathway is cofactor biosynthesis; NAD(+) biosynthesis; NAD(+) from nicotinamide D-ribonucleotide: step 1/1. The protein is Nicotinamide-nucleotide adenylyltransferase of Pyrococcus furiosus (strain ATCC 43587 / DSM 3638 / JCM 8422 / Vc1).